We begin with the raw amino-acid sequence, 61 residues long: Small ribosomal subunit protein uS14 (61 aa).

Positions 24, 27, 40, and 43 each coordinate Zn(2+).

Belongs to the universal ribosomal protein uS14 family. Zinc-binding uS14 subfamily. As to quaternary structure, part of the 30S ribosomal subunit. Contacts proteins S3 and S10. It depends on Zn(2+) as a cofactor.

Functionally, binds 16S rRNA, required for the assembly of 30S particles and may also be responsible for determining the conformation of the 16S rRNA at the A site. The chain is Small ribosomal subunit protein uS14 from Streptococcus thermophilus (strain ATCC BAA-491 / LMD-9).